The following is a 350-amino-acid chain: MMKVRPVERRDLADIFELAGKTGVGMTSLPQNEQHLAARIERALNTWQGSLDPGEQGYLFVLEDSEQQKVVGVSAIEVAVGLNDPWYNFRVGTLVHASKALNVYKSVPTLFLSNDHTGYSELCTLFLDPDYRKDKNGPFLSKVRFLFIAAFRQYFSRKVIAEMRGYTDEQGRSPFWESVGRHFFSIEFAKADYLSGTGQKAFIAELMPKHPLYVDFLAEEARAVIGQVHPHTAPARAVLETEGLQYQGYVDIFDGGPTLEANTDDVRAVRDSSKRTVVIKDYDIEDYDIDPNGRLYLVANDHYHHFRAILMNTHLSDERLRLTPESAEALGVAAGDSVRIVSLFAPETKR.

Leu-125 is a succinyl-CoA binding site. His-229 functions as the Proton donor in the catalytic mechanism.

Belongs to the arginine N-succinyltransferase family.

It carries out the reaction succinyl-CoA + L-arginine = N(2)-succinyl-L-arginine + CoA + H(+). It functions in the pathway amino-acid degradation; L-arginine degradation via AST pathway; L-glutamate and succinate from L-arginine: step 1/5. In terms of biological role, catalyzes the transfer of succinyl-CoA to arginine to produce N(2)-succinylarginine. This Yersinia pseudotuberculosis serotype IB (strain PB1/+) protein is Arginine N-succinyltransferase.